We begin with the raw amino-acid sequence, 380 residues long: Cytochrome b (380 aa).

The next 4 helical transmembrane spans lie at 33–53 (FGSLLGICLITQIVTGLFLAM), 77–98 (WLIRSTHANGASLFFICIYLHV), 113–133 (WNIGVILLMLVMITAFVGYVL), and 178–198 (FFAFHFLLPFVISGASIIHLL). Residues His83 and His97 each contribute to the heme b site. Heme b contacts are provided by His182 and His196. His201 contributes to the a ubiquinone binding site. 4 helical membrane passes run 226–246 (YKDMLGFLITLTTLAFLTLFT), 288–308 (LGGVLALVSSILVLLLVPILH), 320–340 (ITQMLFWALVADMLILTWIGG), and 347–367 (FMTIGQIASITYFSLFLILIP).

Belongs to the cytochrome b family. The cytochrome bc1 complex contains 3 respiratory subunits (MT-CYB, CYC1 and UQCRFS1), 2 core proteins (UQCRC1 and UQCRC2) and probably 6 low-molecular weight proteins. Heme b is required as a cofactor.

The protein resides in the mitochondrion inner membrane. In terms of biological role, component of the ubiquinol-cytochrome c reductase complex (complex III or cytochrome b-c1 complex) that is part of the mitochondrial respiratory chain. The b-c1 complex mediates electron transfer from ubiquinol to cytochrome c. Contributes to the generation of a proton gradient across the mitochondrial membrane that is then used for ATP synthesis. This chain is Cytochrome b (mt-cyb), found in Latimeria chalumnae (Coelacanth).